The primary structure comprises 195 residues: Coagulogen (195 aa).

The signal sequence occupies residues 1 to 20; that stretch reads MEKKLLGIAILFVTVVSVLA. 8 cysteine pairs are disulfide-bonded: C28-C188, C30-C115, C80-C182, C85-C141, C95-C189, C108-C161, C147-C191, and C155-C193.

The protein belongs to the coagulin family. In terms of assembly, coagulogen is cleaved after Arg-38 and Arg-66 by a clotting enzyme contained in the hemocyte and activated by a bacterial endotoxin (lipopolysaccharide). This cleavage releases the peptide C and leaves 2 chains of coagulin, A and B, linked by two disulfide bonds. Coagulin molecules interlink to form a gel. As to expression, hemolymph.

The protein resides in the secreted. Coagulogen is a gel-forming protein of hemolymph; it hinders the spread of invaders by immobilizing them. The chain is Coagulogen from Limulus polyphemus (Atlantic horseshoe crab).